The primary structure comprises 429 residues: Enolase (429 aa).

Gln-168 is a binding site for (2R)-2-phosphoglycerate. The Proton donor role is filled by Glu-210. 3 residues coordinate Mg(2+): Asp-247, Glu-288, and Asp-315. Positions 340, 369, 370, and 391 each coordinate (2R)-2-phosphoglycerate. Lys-340 functions as the Proton acceptor in the catalytic mechanism.

This sequence belongs to the enolase family. Requires Mg(2+) as cofactor.

The protein resides in the cytoplasm. It is found in the secreted. The protein localises to the cell surface. The catalysed reaction is (2R)-2-phosphoglycerate = phosphoenolpyruvate + H2O. It functions in the pathway carbohydrate degradation; glycolysis; pyruvate from D-glyceraldehyde 3-phosphate: step 4/5. Its function is as follows. Catalyzes the reversible conversion of 2-phosphoglycerate (2-PG) into phosphoenolpyruvate (PEP). It is essential for the degradation of carbohydrates via glycolysis. This chain is Enolase, found in Nostoc sp. (strain PCC 7120 / SAG 25.82 / UTEX 2576).